The following is a 362-amino-acid chain: 3-isopropylmalate dehydrogenase (362 aa).

An NAD(+)-binding site is contributed by 78-91 (GPKWETLPPDEQPE). Substrate contacts are provided by Arg-99, Arg-109, Arg-138, and Asp-227. Positions 227, 251, and 255 each coordinate Mg(2+). 285–297 (GSAPDIAGQGIAN) provides a ligand contact to NAD(+).

This sequence belongs to the isocitrate and isopropylmalate dehydrogenases family. LeuB type 1 subfamily. As to quaternary structure, homodimer. Mg(2+) is required as a cofactor. Requires Mn(2+) as cofactor.

Its subcellular location is the cytoplasm. The enzyme catalyses (2R,3S)-3-isopropylmalate + NAD(+) = 4-methyl-2-oxopentanoate + CO2 + NADH. It functions in the pathway amino-acid biosynthesis; L-leucine biosynthesis; L-leucine from 3-methyl-2-oxobutanoate: step 3/4. Functionally, catalyzes the oxidation of 3-carboxy-2-hydroxy-4-methylpentanoate (3-isopropylmalate) to 3-carboxy-4-methyl-2-oxopentanoate. The product decarboxylates to 4-methyl-2 oxopentanoate. This chain is 3-isopropylmalate dehydrogenase, found in Geobacter metallireducens (strain ATCC 53774 / DSM 7210 / GS-15).